Reading from the N-terminus, the 309-residue chain is 2-phosphoglycerate kinase (309 aa).

Residues 5 to 92 (NDIIVRGKSY…LWRMVLGRRP (88 aa)) form the ATP-cone domain.

Belongs to the 2-phosphoglycerate kinase family. The cofactor is a divalent metal cation.

It carries out the reaction (2R)-2-phosphoglycerate + ATP = (2R)-2,3-bisphosphoglycerate + ADP + H(+). It functions in the pathway thermoadapter biosynthesis; cyclic 2,3-diphosphoglycerate biosynthesis; cyclic 2,3-diphosphoglycerate from 2-phospho-D-glycerate: step 1/2. Its function is as follows. Catalyzes the phosphorylation of 2-phosphoglycerate to 2,3-diphosphoglycerate. Involved in the biosynthesis of cyclic 2,3-bisphosphoglycerate, a thermoprotectant. The protein is 2-phosphoglycerate kinase of Methanocaldococcus jannaschii (strain ATCC 43067 / DSM 2661 / JAL-1 / JCM 10045 / NBRC 100440) (Methanococcus jannaschii).